Consider the following 414-residue polypeptide: Zinc metalloproteinase nas-26 (414 aa).

Positions 1 to 20 (MTSSLVLILAPLALVAIGEA) are cleaved as a signal peptide. A propeptide spanning residues 21–61 (AFGNSSKIFEIPGLEVMASDKYPHFTTIETVSRTKVHRHRR) is cleaved from the precursor. N-linked (GlcNAc...) asparagine glycosylation occurs at asparagine 24. One can recognise a Peptidase M12A domain in the interval 62–264 (EVIAGQIYDW…AKVINDIYCP (203 aa)). 6 cysteine pairs are disulfide-bonded: cysteine 103-cysteine 263, cysteine 126-cysteine 146, cysteine 267-cysteine 286, cysteine 289-cysteine 300, cysteine 308-cysteine 331, and cysteine 358-cysteine 378. Histidine 154 serves as a coordination point for Zn(2+). Residue glutamate 155 is part of the active site. Positions 158 and 164 each coordinate Zn(2+). One can recognise an EGF-like domain in the interval 251–307 (AFLDAKVINDIYCPNACQGRNHLNCLAGGYPDPNNCNVCRCPEGLGGPDCGRLQPSP). The CUB domain occupies 308–414 (CGGEIHASDQ…RFSLRFRRQA (107 aa)).

Zn(2+) serves as cofactor.

The protein localises to the secreted. Its function is as follows. Metalloprotease. This chain is Zinc metalloproteinase nas-26 (toh-1), found in Caenorhabditis elegans.